The sequence spans 686 residues: Asparagine-rich protein (686 aa).

A signal peptide spans 1 to 18 (MKGTSALLLIGFFHATIS). 3 disordered regions span residues 34–73 (KRGN…DKTA), 125–148 (SLTS…SSSI), and 201–236 (ITRQ…QPPN). The span at 37–49 (NLNTGGQITSNSA) shows a compositional bias: polar residues. Residues 62-73 (EPPKRRNTDKTA) show a composition bias toward basic and acidic residues.

As to expression, prismatic layer of shell (at protein level). Expressed primarily in the mantle with highest level in the mantle edge and lower level in the mantle pallium.

It is found in the secreted. The sequence is that of Asparagine-rich protein from Margaritifera margaritifera (Freshwater pearl mussel).